Consider the following 301-residue polypeptide: Cutinase (301 aa).

The first 40 residues, 1–40 (MAVMTPRRERSSLLSRALQVTAAAATALVTAVSLAAPAHA), serve as a signal peptide directing secretion. Poly(ethylene terephthalate) is bound at residue Tyr-100. Ser-170 functions as the Nucleophile in the catalytic mechanism. The poly(ethylene terephthalate) site is built by Met-171 and Trp-195. Residues Asp-216 and His-248 each act as charge relay system in the active site. A disulfide bond links Cys-281 and Cys-299.

Belongs to the AB hydrolase superfamily.

It is found in the secreted. It localises to the periplasm. The catalysed reaction is a butanoate ester + H2O = an aliphatic alcohol + butanoate + H(+). It carries out the reaction (ethylene terephthalate)(n) + H2O = (ethylene terephthalate)(n-1) + 4-[(2-hydroxyethoxy)carbonyl]benzoate + H(+). It catalyses the reaction cutin + H2O = cutin monomers.. Its activity is regulated as follows. Activated by magnesium ions. Activated by calcium ions. Inhibited by the serine hydrolase inhibitor phenylmethanesulfonyl fluoride (PMSF). Functionally, catalyzes the hydrolysis of cutin, a polyester that forms the structure of plant cuticle. Shows esterase activity towards p-nitrophenol-linked aliphatic esters (pNP-aliphatic esters). Also hydrolyzes the triglyceride triolein. Capable of degrading the plastic poly(ethylene terephthalate) (PET), the most abundant polyester plastic in the world. The protein is Cutinase of Thermobifida fusca (strain YX).